The primary structure comprises 402 residues: S-adenosylmethionine synthase (402 aa).

His-16 serves as a coordination point for ATP. Mg(2+) is bound at residue Asp-18. Glu-44 is a binding site for K(+). L-methionine-binding residues include Glu-57 and Gln-109. The segment at 109–119 (QSAHIAQGVDA) is flexible loop. Residues 174 to 176 (DTK), Asp-252, 258 to 259 (RK), Ala-275, and Lys-279 contribute to the ATP site. Asp-252 contacts L-methionine. Lys-283 lines the L-methionine pocket.

Belongs to the AdoMet synthase family. In terms of assembly, homotetramer; dimer of dimers. Mg(2+) is required as a cofactor. K(+) serves as cofactor.

It localises to the cytoplasm. The enzyme catalyses L-methionine + ATP + H2O = S-adenosyl-L-methionine + phosphate + diphosphate. It functions in the pathway amino-acid biosynthesis; S-adenosyl-L-methionine biosynthesis; S-adenosyl-L-methionine from L-methionine: step 1/1. In terms of biological role, catalyzes the formation of S-adenosylmethionine (AdoMet) from methionine and ATP. The overall synthetic reaction is composed of two sequential steps, AdoMet formation and the subsequent tripolyphosphate hydrolysis which occurs prior to release of AdoMet from the enzyme. This chain is S-adenosylmethionine synthase, found in Rhizorhabdus wittichii (strain DSM 6014 / CCUG 31198 / JCM 15750 / NBRC 105917 / EY 4224 / RW1) (Sphingomonas wittichii).